Reading from the N-terminus, the 258-residue chain is Shikimate dehydrogenase (NADP(+)) (258 aa).

Shikimate-binding positions include 14-16 and Thr-61; that span reads SES. Residue Lys-65 is the Proton acceptor of the active site. Residues Asn-86 and Asp-101 each contribute to the shikimate site. NADP(+) is bound by residues 125–129 and Leu-211; that span reads GSGGS. Position 213 (Tyr-213) interacts with shikimate. Gly-234 provides a ligand contact to NADP(+).

It belongs to the shikimate dehydrogenase family. Homodimer.

It catalyses the reaction shikimate + NADP(+) = 3-dehydroshikimate + NADPH + H(+). Its pathway is metabolic intermediate biosynthesis; chorismate biosynthesis; chorismate from D-erythrose 4-phosphate and phosphoenolpyruvate: step 4/7. Involved in the biosynthesis of the chorismate, which leads to the biosynthesis of aromatic amino acids. Catalyzes the reversible NADPH linked reduction of 3-dehydroshikimate (DHSA) to yield shikimate (SA). The polypeptide is Shikimate dehydrogenase (NADP(+)) (Clostridium botulinum (strain Loch Maree / Type A3)).